Consider the following 294-residue polypeptide: Formamidopyrimidine-DNA glycosylase (294 aa).

Pro2 acts as the Schiff-base intermediate with DNA in catalysis. The active-site Proton donor is Glu3. Lys61 functions as the Proton donor; for beta-elimination activity in the catalytic mechanism. Positions 104, 123, and 169 each coordinate DNA. An FPG-type zinc finger spans residues Ala255–Pro289. The Proton donor; for delta-elimination activity role is filled by Arg279.

Belongs to the FPG family. As to quaternary structure, monomer. Requires Zn(2+) as cofactor.

The enzyme catalyses Hydrolysis of DNA containing ring-opened 7-methylguanine residues, releasing 2,6-diamino-4-hydroxy-5-(N-methyl)formamidopyrimidine.. It catalyses the reaction 2'-deoxyribonucleotide-(2'-deoxyribose 5'-phosphate)-2'-deoxyribonucleotide-DNA = a 3'-end 2'-deoxyribonucleotide-(2,3-dehydro-2,3-deoxyribose 5'-phosphate)-DNA + a 5'-end 5'-phospho-2'-deoxyribonucleoside-DNA + H(+). In terms of biological role, involved in base excision repair of DNA damaged by oxidation or by mutagenic agents. Acts as a DNA glycosylase that recognizes and removes damaged bases. Has a preference for oxidized purines, such as 7,8-dihydro-8-oxoguanine (8-oxoG). Has AP (apurinic/apyrimidinic) lyase activity and introduces nicks in the DNA strand. Cleaves the DNA backbone by beta-delta elimination to generate a single-strand break at the site of the removed base with both 3'- and 5'-phosphates. The sequence is that of Formamidopyrimidine-DNA glycosylase from Nocardia farcinica (strain IFM 10152).